We begin with the raw amino-acid sequence, 127 residues long: Large ribosomal subunit protein bL17 (127 aa).

The protein belongs to the bacterial ribosomal protein bL17 family. As to quaternary structure, part of the 50S ribosomal subunit. Contacts protein L32.

This chain is Large ribosomal subunit protein bL17, found in Leuconostoc citreum (strain KM20).